Here is a 100-residue protein sequence, read N- to C-terminus: ATP phosphoribosyltransferase (100 aa).

This sequence belongs to the ATP phosphoribosyltransferase family. Long subfamily. In terms of assembly, equilibrium between an active dimeric form, an inactive hexameric form and higher aggregates. Interconversion between the various forms is largely reversible and is influenced by the natural substrates and inhibitors of the enzyme. It depends on Mg(2+) as a cofactor.

It localises to the cytoplasm. The catalysed reaction is 1-(5-phospho-beta-D-ribosyl)-ATP + diphosphate = 5-phospho-alpha-D-ribose 1-diphosphate + ATP. The protein operates within amino-acid biosynthesis; L-histidine biosynthesis; L-histidine from 5-phospho-alpha-D-ribose 1-diphosphate: step 1/9. Its activity is regulated as follows. Feedback inhibited by histidine. In terms of biological role, catalyzes the condensation of ATP and 5-phosphoribose 1-diphosphate to form N'-(5'-phosphoribosyl)-ATP (PR-ATP). Has a crucial role in the pathway because the rate of histidine biosynthesis seems to be controlled primarily by regulation of HisG enzymatic activity. This is ATP phosphoribosyltransferase (hisG) from Klebsiella pneumoniae.